We begin with the raw amino-acid sequence, 317 residues long: Serpentine receptor class delta-46 (317 aa).

Helical transmembrane passes span 9–29 (FYII…YVII), 42–62 (IFLC…LLQA), 91–111 (YVLC…TMYV), 129–149 (VIIL…YLTI), 185–205 (QIVF…MFCL), 239–259 (AFLP…ALIT), and 269–289 (FVSV…FYTV).

This sequence belongs to the nematode receptor-like protein srd family.

It localises to the membrane. In Caenorhabditis elegans, this protein is Serpentine receptor class delta-46 (srd-46).